We begin with the raw amino-acid sequence, 127 residues long: Small ribosomal subunit protein eS6 (127 aa).

This sequence belongs to the eukaryotic ribosomal protein eS6 family.

The polypeptide is Small ribosomal subunit protein eS6 (Picrophilus torridus (strain ATCC 700027 / DSM 9790 / JCM 10055 / NBRC 100828 / KAW 2/3)).